The chain runs to 81 residues: X antigen family member 1 (81 aa).

K12 participates in a covalent cross-link: Glycyl lysine isopeptide (Lys-Gly) (interchain with G-Cter in SUMO2). At S20 the chain carries Phosphoserine. Glycyl lysine isopeptide (Lys-Gly) (interchain with G-Cter in SUMO2) cross-links involve residues K61 and K65.

It belongs to the GAGE family. In terms of tissue distribution, in normal tissues, highly expressed in testis. Expressed also in many different types of cancers: highly expressed in breast cancer, prostate cancer and many types of lung cancers, including squamous cell carcinoma, small cell carcinoma, non-small cell carcinoma, and adenocarcinoma, as well as in Ewing's cell lines, in some Ewing's sarcoma patient samples, and in one of one alveolar rhabdomyosarcoma patient sample.

This chain is X antigen family member 1, found in Homo sapiens (Human).